Consider the following 59-residue polypeptide: U-myrmeciitoxin(01)-Mg5b (59 aa).

Positions 1–21 (MRLSYLSLALAIIFVLTIMHA) are cleaved as a signal peptide. A propeptide spanning residues 22-38 (SNVEAKASADPEPDAVG) is cleaved from the precursor.

Expressed by the venom gland.

The protein resides in the secreted. Its function is as follows. May have antimicrobial properties, like most ant linear peptides. The sequence is that of U-myrmeciitoxin(01)-Mg5b from Myrmecia gulosa (Red bulldog ant).